The sequence spans 326 residues: HTH-type transcriptional regulator BlaA (326 aa).

Residues 1 to 59 (MDVVNACRAFVKVSERGSFTVGAAAAQMSQSVASRRVAALEKHFGERLFDRASRRPSLT) form the HTH lysR-type domain. Positions 19 to 38 (FTVGAAAAQMSQSVASRRVA) form a DNA-binding region, H-T-H motif. Residues 289 to 326 (TADHGPDPATGAGPGADAGTEPGARAEPGAPEEGAQAC) are disordered. The span at 295 to 326 (DPATGAGPGADAGTEPGARAEPGAPEEGAQAC) shows a compositional bias: low complexity.

Belongs to the LysR transcriptional regulatory family.

Its function is as follows. Positive regulator of the expression of the gene (blaB) for beta-lactamase. It binds to the blaL-blaA intercistronic region. The sequence is that of HTH-type transcriptional regulator BlaA (blaA) from Streptomyces cacaoi.